A 367-amino-acid chain; its full sequence is Outer membrane porin C (367 aa).

Positions 1 to 21 (MKVKVLSLLVPALLVAGAANA) are cleaved as a signal peptide. The Periplasmic portion of the chain corresponds to 22–33 (AEVYNKDGNKLD). Residues 34–42 (LYGKVDGLH) traverse the membrane as a beta stranded segment. The Extracellular portion of the chain corresponds to 43–53 (YFSDNKDVDGD). A beta stranded membrane pass occupies residues 54 to 63 (QTYMRLGFKG). The Periplasmic segment spans residues 64–73 (ETQVTDQLTG). Residues 74 to 84 (YGQWEYQIQGN) traverse the membrane as a beta stranded segment. The Extracellular segment spans residues 85–91 (SAENENN). A beta stranded membrane pass occupies residues 92–101 (SWTRVAFAGL). Over 102–106 (KFQDV) the chain is Periplasmic. Residues 107–115 (GSFDYGRNY) traverse the membrane as a beta stranded segment. The interval 116 to 133 (GVVYDVTSWTDVLPEFGG) is loop L3; may constrict the pore. At 116–141 (GVVYDVTSWTDVLPEFGGDTYGSDNF) the chain is on the extracellular side. Residues 142 to 154 (MQQRGNGFATYRN) traverse the membrane as a beta stranded segment. Residues 155–163 (TDFFGLVDG) lie on the Periplasmic side of the membrane. The beta stranded transmembrane segment at 164–171 (LNFAVQYQ) threads the bilayer. Residues 172–200 (GKNGNPSGEGFTSGVTNNGRDALRQNGDG) lie on the Extracellular side of the membrane. Residues 201–207 (VGGSITY) form a beta stranded membrane-spanning segment. The Periplasmic portion of the chain corresponds to 208–211 (DYEG). Residues 212 to 219 (FGIGGAIS) traverse the membrane as a beta stranded segment. Topologically, residues 220–241 (SSKRTDAQNTAAYIGNGDRAET) are extracellular. The chain crosses the membrane as a beta stranded span at residues 242-248 (YTGGLKY). Topologically, residues 249–252 (DANN) are periplasmic. The beta stranded transmembrane segment at 253–260 (IYLAAQYT) threads the bilayer. Residues 261-269 (QTYNATRVG) are Extracellular-facing. The beta stranded transmembrane segment at 270 to 286 (SLGWANKAQNFEAVAQY) threads the bilayer. At 287–291 (QFDFG) the chain is on the periplasmic side. A beta stranded membrane pass occupies residues 292–299 (LRPSLAYL). Residues 300 to 318 (QSKGKNLGRGYDDEDILKY) are Extracellular-facing. A beta stranded transmembrane segment spans residues 319 to 326 (VDVGATYY). Over 327-330 (FNKN) the chain is Periplasmic. Residues 331–338 (MSTYVDYK) traverse the membrane as a beta stranded segment. The Extracellular portion of the chain corresponds to 339–358 (INLLDDNQFTRDAGINTDNI). Mg(2+) is bound by residues Asn-340, Leu-342, and Thr-355. The chain crosses the membrane as a beta stranded span at residues 359–366 (VALGLVYQ). Phe-367 is a topological domain (periplasmic).

Belongs to the Gram-negative porin family. In terms of assembly, homotrimer. Forms mixed heterotrimers with OmpF and with PhoE; other mixed heterotrimers are also probable.

The protein resides in the cell outer membrane. Forms pores that allow passive diffusion of small molecules across the outer membrane. In terms of biological role, (Microbial infection) Supports colicin E5 entry in the absence of its major receptor OmpF. Functionally, (Microbial infection) A mixed OmpC-OmpF heterotrimer is the outer membrane receptor for toxin CdiA-EC536; polymorphisms in extracellular loops 4 and 5 of OmpC confer susceptibility to CdiA-EC536-mediated toxicity. The protein is Outer membrane porin C (ompC) of Escherichia coli (strain K12).